Here is a 404-residue protein sequence, read N- to C-terminus: Cysteine desulfurase IscS (404 aa).

Pyridoxal 5'-phosphate-binding positions include 75-76, Asn155, Gln183, and 203-205; these read AT and SGH. Lys206 is modified (N6-(pyridoxal phosphate)lysine). Thr243 is a pyridoxal 5'-phosphate binding site. Catalysis depends on Cys328, which acts as the Cysteine persulfide intermediate. [2Fe-2S] cluster is bound at residue Cys328.

Belongs to the class-V pyridoxal-phosphate-dependent aminotransferase family. NifS/IscS subfamily. In terms of assembly, homodimer. Forms a heterotetramer with IscU, interacts with other sulfur acceptors. Pyridoxal 5'-phosphate is required as a cofactor.

Its subcellular location is the cytoplasm. The catalysed reaction is (sulfur carrier)-H + L-cysteine = (sulfur carrier)-SH + L-alanine. It functions in the pathway cofactor biosynthesis; iron-sulfur cluster biosynthesis. In terms of biological role, master enzyme that delivers sulfur to a number of partners involved in Fe-S cluster assembly, tRNA modification or cofactor biosynthesis. Catalyzes the removal of elemental sulfur atoms from cysteine to produce alanine. Functions as a sulfur delivery protein for Fe-S cluster synthesis onto IscU, an Fe-S scaffold assembly protein, as well as other S acceptor proteins. The sequence is that of Cysteine desulfurase IscS from Pectobacterium carotovorum subsp. carotovorum (strain PC1).